A 140-amino-acid chain; its full sequence is Oocyte zinc finger protein XlCOF15 (140 aa).

C2H2-type zinc fingers lie at residues phenylalanine 6–histidine 28, phenylalanine 34–histidine 56, phenylalanine 62–histidine 84, phenylalanine 90–histidine 112, and phenylalanine 118–histidine 140.

Belongs to the krueppel C2H2-type zinc-finger protein family.

It localises to the nucleus. In terms of biological role, may be involved in transcriptional regulation. The polypeptide is Oocyte zinc finger protein XlCOF15 (Xenopus laevis (African clawed frog)).